Consider the following 156-residue polypeptide: Ribosomal RNA large subunit methyltransferase H (156 aa).

S-adenosyl-L-methionine-binding positions include Leu72, Gly104, and 123-128 (LGKMVW).

This sequence belongs to the RNA methyltransferase RlmH family. In terms of assembly, homodimer.

The protein resides in the cytoplasm. The catalysed reaction is pseudouridine(1915) in 23S rRNA + S-adenosyl-L-methionine = N(3)-methylpseudouridine(1915) in 23S rRNA + S-adenosyl-L-homocysteine + H(+). Specifically methylates the pseudouridine at position 1915 (m3Psi1915) in 23S rRNA. This is Ribosomal RNA large subunit methyltransferase H from Roseobacter denitrificans (strain ATCC 33942 / OCh 114) (Erythrobacter sp. (strain OCh 114)).